Here is a 463-residue protein sequence, read N- to C-terminus: tRNA-2-methylthio-N(6)-dimethylallyladenosine synthase (463 aa).

Positions 19 to 135 (GSYWITTFGC…LESLLNQVDS (117 aa)) constitute an MTTase N-terminal domain. Cysteine 28, cysteine 64, cysteine 98, cysteine 170, cysteine 174, and cysteine 177 together coordinate [4Fe-4S] cluster. In terms of domain architecture, Radical SAM core spans 156–393 (RDSSICGWVN…NSLVENIAKE (238 aa)). One can recognise a TRAM domain in the interval 396 to 463 (QRYKNTSQEI…RPFSLTAKLL (68 aa)).

It belongs to the methylthiotransferase family. MiaB subfamily. Monomer. The cofactor is [4Fe-4S] cluster.

It is found in the cytoplasm. It carries out the reaction N(6)-dimethylallyladenosine(37) in tRNA + (sulfur carrier)-SH + AH2 + 2 S-adenosyl-L-methionine = 2-methylsulfanyl-N(6)-dimethylallyladenosine(37) in tRNA + (sulfur carrier)-H + 5'-deoxyadenosine + L-methionine + A + S-adenosyl-L-homocysteine + 2 H(+). Catalyzes the methylthiolation of N6-(dimethylallyl)adenosine (i(6)A), leading to the formation of 2-methylthio-N6-(dimethylallyl)adenosine (ms(2)i(6)A) at position 37 in tRNAs that read codons beginning with uridine. The protein is tRNA-2-methylthio-N(6)-dimethylallyladenosine synthase of Prochlorococcus marinus (strain NATL2A).